A 177-amino-acid chain; its full sequence is uncharacterized protein (177 aa).

To Synechocystis PCC 6803 slr1290 and sll0925.

This is an uncharacterized protein from Synechocystis sp. (strain ATCC 27184 / PCC 6803 / Kazusa).